Consider the following 767-residue polypeptide: Polyribonucleotide nucleotidyltransferase (767 aa).

Positions 509 and 515 each coordinate Mg(2+). A KH domain is found at 575 to 634 (PRILTVKVPIDKIGEVIGPKGKMINSIQDETGAEITIEDDGTIYIGATDGPSAEAARDAI). The S1 motif domain occupies 646–718 (GERYLGTVVK…ERGKLSLVPV (73 aa)). The interval 725 to 767 (AVAAPNGGESPNGAKKTDASGNGAKQPRRRRRTRSSSRSSENT) is disordered. Positions 750–759 (QPRRRRRTRS) are enriched in basic residues.

The protein belongs to the polyribonucleotide nucleotidyltransferase family. The cofactor is Mg(2+).

The protein resides in the cytoplasm. It carries out the reaction RNA(n+1) + phosphate = RNA(n) + a ribonucleoside 5'-diphosphate. Involved in mRNA degradation. Catalyzes the phosphorolysis of single-stranded polyribonucleotides processively in the 3'- to 5'-direction. This Thermobifida fusca (strain YX) protein is Polyribonucleotide nucleotidyltransferase.